We begin with the raw amino-acid sequence, 378 residues long: D-galactarolactone cycloisomerase (378 aa).

Mg(2+) is bound by residues Asp194, Glu220, and Glu246. Catalysis depends on His296, which acts as the Proton acceptor.

Belongs to the mandelate racemase/muconate lactonizing enzyme family. Homooctamer. Mg(2+) serves as cofactor.

It carries out the reaction D-glucaro-1,4-lactone = 5-dehydro-4-deoxy-D-glucarate + H(+). It catalyses the reaction D-galactaro-1,4-lactone = 5-dehydro-4-deoxy-D-glucarate + H(+). It participates in carbohydrate acid metabolism; D-galacturonate degradation via prokaryotic oxidative pathway. Catalyzes the ring opening of D-galactaro-1,4-lactone to yield 5-keto-4-deoxy-D-glucarate (KDG) via a beta-elimination reaction. This is a step in the oxidative degradation pathway of D-galacturonate, which allows A.tumefaciens to utilize D-galacturonate as a sole carbon source. To a lesser extent, can also use D-glucaro-1,4-lactone as substrate to produce KDG, but cannot use D-galactaro-1,5-lactone, D-glucaro-6,3-lactone and linear D-glucarate. The polypeptide is D-galactarolactone cycloisomerase (gci) (Agrobacterium fabrum (strain C58 / ATCC 33970) (Agrobacterium tumefaciens (strain C58))).